The sequence spans 329 residues: MTSPSDVEASTETVDRGSRRNQTNDNPSADLVRVYLNGIGKTALLNAEDEVELAQTIEVGLYAEYLLENSQEPLTRAMKRDLKVLVKEGRKARSHLLEANLRLVVSLAKRYTGRGMPLLDLIQEGNLGLIRAMEKFDYSKGFKFSTYATWWIRQAITRGMADQSRTIRLPVHLVEQVNKLSRIKREMYQQLGREATNEELAEESGIEESKIEMLLRQSRDPVSLDMPVGADEEAPLGDFIEDSEATDAESAVVASLRHSDIRTVLDTLEQREQDVIRLRYGLDDGVPRTLDQIGRQFGLSRERVRQIEREVMSKLRDGARAEKLRAYAQ.

Positions 1 to 12 (MTSPSDVEASTE) are enriched in polar residues. The tract at residues 1–27 (MTSPSDVEASTETVDRGSRRNQTNDNP) is disordered. The Polymerase core binding motif lies at 120–133 (DLIQEGNLGLIRAM). The H-T-H motif DNA-binding region spans 290 to 309 (LDQIGRQFGLSRERVRQIER).

The protein belongs to the sigma-70 factor family.

Functionally, sigma factors are initiation factors that promote the attachment of RNA polymerase to specific initiation sites and are then released. The protein is RNA polymerase sigma factor SigB (sigB) of Corynebacterium diphtheriae (strain ATCC 700971 / NCTC 13129 / Biotype gravis).